We begin with the raw amino-acid sequence, 419 residues long: Serine hydroxymethyltransferase (419 aa).

(6S)-5,6,7,8-tetrahydrofolate-binding positions include leucine 121 and 125–127 (GHL). Lysine 229 is modified (N6-(pyridoxal phosphate)lysine). 354–356 (SPF) is a (6S)-5,6,7,8-tetrahydrofolate binding site.

It belongs to the SHMT family. In terms of assembly, homodimer. Requires pyridoxal 5'-phosphate as cofactor.

The protein localises to the cytoplasm. It carries out the reaction (6R)-5,10-methylene-5,6,7,8-tetrahydrofolate + glycine + H2O = (6S)-5,6,7,8-tetrahydrofolate + L-serine. It participates in one-carbon metabolism; tetrahydrofolate interconversion. It functions in the pathway amino-acid biosynthesis; glycine biosynthesis; glycine from L-serine: step 1/1. Catalyzes the reversible interconversion of serine and glycine with tetrahydrofolate (THF) serving as the one-carbon carrier. This reaction serves as the major source of one-carbon groups required for the biosynthesis of purines, thymidylate, methionine, and other important biomolecules. Also exhibits THF-independent aldolase activity toward beta-hydroxyamino acids, producing glycine and aldehydes, via a retro-aldol mechanism. The chain is Serine hydroxymethyltransferase from Coxiella burnetii (strain CbuG_Q212) (Coxiella burnetii (strain Q212)).